Reading from the N-terminus, the 269-residue chain is tRNA uridine(34) hydroxylase (269 aa).

In terms of domain architecture, Rhodanese spans 121-214 (SQPDVLVIDT…YLERTHNKNG (94 aa)). Cys-174 (cysteine persulfide intermediate) is an active-site residue.

The protein belongs to the TrhO family.

It carries out the reaction uridine(34) in tRNA + AH2 + O2 = 5-hydroxyuridine(34) in tRNA + A + H2O. In terms of biological role, catalyzes oxygen-dependent 5-hydroxyuridine (ho5U) modification at position 34 in tRNAs. The protein is tRNA uridine(34) hydroxylase of Wolbachia sp. subsp. Brugia malayi (strain TRS).